A 558-amino-acid chain; its full sequence is WW domain-containing adapter protein with coiled-coil (558 aa).

Disordered stretches follow at residues Met-1–His-129, Gln-159–Pro-244, and Val-321–Arg-461. Over residues Gln-22–Lys-32 the composition is skewed to polar residues. Composition is skewed to basic and acidic residues over residues Ser-33–Asn-46 and Arg-56–Gly-70. Residues Gly-72–Gly-82 are compositionally biased toward basic residues. Positions Asn-99–Ser-116 are enriched in low complexity. The region spanning Phe-120 to Glu-153 is the WW domain. Residues Pro-175 to Ala-184 are compositionally biased toward basic and acidic residues. A compositionally biased stretch (polar residues) spans Thr-188 to Ala-200. A compositionally biased stretch (low complexity) spans Pro-204–Ser-217. 2 stretches are compositionally biased toward polar residues: residues Asn-223–Pro-234 and Val-321–Lys-378. A compositionally biased stretch (low complexity) spans Ser-402–Asn-431. The span at Asn-432–Val-443 shows a compositional bias: gly residues. Residues Gln-529–Ser-555 are a coiled coil.

The protein localises to the nucleus. Its function is as follows. Acts as a linker between gene transcription and histone H2B monoubiquitination at 'Lys-120' (H2BK120ub1). Positive regulator of amino acid starvation-induced autophagy. Positively regulates MTOR activity. May negatively regulate the ubiquitin proteasome pathway. The chain is WW domain-containing adapter protein with coiled-coil (waca) from Danio rerio (Zebrafish).